The sequence spans 95 residues: Small ribosomal subunit protein uS19 (95 aa).

It belongs to the universal ribosomal protein uS19 family.

In terms of biological role, protein S19 forms a complex with S13 that binds strongly to the 16S ribosomal RNA. The chain is Small ribosomal subunit protein uS19 from Myxococcus xanthus (strain DK1622).